We begin with the raw amino-acid sequence, 668 residues long: UvrABC system protein B (668 aa).

The region spanning 27–413 (AGVQAGHRFQ…STQVVEQIIR (387 aa)) is the Helicase ATP-binding domain. 40 to 47 (GATGTGKT) contributes to the ATP binding site. The Beta-hairpin signature appears at 93–116 (YYDYYQPEAYIPVTDTYIEKSASI). Positions 430–596 (QVDDLYGEIR…PIVKKTSNAI (167 aa)) constitute a Helicase C-terminal domain. The UVR domain maps to 628-663 (PPLIQDLEAKMKAAAQELAFEEAARYRDQIKRLRDR).

The protein belongs to the UvrB family. In terms of assembly, forms a heterotetramer with UvrA during the search for lesions. Interacts with UvrC in an incision complex.

It localises to the cytoplasm. In terms of biological role, the UvrABC repair system catalyzes the recognition and processing of DNA lesions. A damage recognition complex composed of 2 UvrA and 2 UvrB subunits scans DNA for abnormalities. Upon binding of the UvrA(2)B(2) complex to a putative damaged site, the DNA wraps around one UvrB monomer. DNA wrap is dependent on ATP binding by UvrB and probably causes local melting of the DNA helix, facilitating insertion of UvrB beta-hairpin between the DNA strands. Then UvrB probes one DNA strand for the presence of a lesion. If a lesion is found the UvrA subunits dissociate and the UvrB-DNA preincision complex is formed. This complex is subsequently bound by UvrC and the second UvrB is released. If no lesion is found, the DNA wraps around the other UvrB subunit that will check the other stand for damage. This Thermosynechococcus vestitus (strain NIES-2133 / IAM M-273 / BP-1) protein is UvrABC system protein B.